The chain runs to 500 residues: Cytochrome P450 71B9 (500 aa).

A helical transmembrane segment spans residues 1-21 (MATIWFLSLLFLCCILLAAFK). Cysteine 440 lines the heme pocket.

Belongs to the cytochrome P450 family. It depends on heme as a cofactor.

The protein resides in the membrane. This is Cytochrome P450 71B9 (CYP71B9) from Arabidopsis thaliana (Mouse-ear cress).